A 188-amino-acid polypeptide reads, in one-letter code: Probable DNA-directed RNA polymerase subunit delta (188 aa).

Positions 14 to 83 (LSMIEVARAI…GDNKWGLRSW (70 aa)) constitute an HTH HARE-type domain. A disordered region spans residues 117–188 (GDEDAIDYSD…EDDEDDEEEE (72 aa)).

This sequence belongs to the RpoE family. As to quaternary structure, RNAP is composed of a core of 2 alpha, a beta and a beta' subunits. The core is associated with a delta subunit and one of several sigma factors.

Functionally, participates in both the initiation and recycling phases of transcription. In the presence of the delta subunit, RNAP displays an increased specificity of transcription, a decreased affinity for nucleic acids, and an increased efficiency of RNA synthesis because of enhanced recycling. The protein is Probable DNA-directed RNA polymerase subunit delta of Streptococcus uberis (strain ATCC BAA-854 / 0140J).